Here is a 101-residue protein sequence, read N- to C-terminus: Small ribosomal subunit protein uS14A (101 aa).

A disordered region spans residues 47–66 (ALASLPRDSNPNRVTNRCAL).

The protein belongs to the universal ribosomal protein uS14 family. As to quaternary structure, part of the 30S ribosomal subunit. Contacts proteins S3 and S10.

In terms of biological role, binds 16S rRNA, required for the assembly of 30S particles and may also be responsible for determining the conformation of the 16S rRNA at the A site. The chain is Small ribosomal subunit protein uS14A from Myxococcus xanthus (strain DK1622).